Consider the following 234-residue polypeptide: 7-cyano-7-deazaguanine synthase (234 aa).

13–23 contributes to the ATP binding site; sequence LSGGQDSTTCL. Cys-193, Cys-201, Cys-204, and Cys-207 together coordinate Zn(2+).

Belongs to the QueC family. Zn(2+) serves as cofactor.

The enzyme catalyses 7-carboxy-7-deazaguanine + NH4(+) + ATP = 7-cyano-7-deazaguanine + ADP + phosphate + H2O + H(+). Its pathway is purine metabolism; 7-cyano-7-deazaguanine biosynthesis. Its function is as follows. Catalyzes the ATP-dependent conversion of 7-carboxy-7-deazaguanine (CDG) to 7-cyano-7-deazaguanine (preQ(0)). This is 7-cyano-7-deazaguanine synthase from Chromobacterium violaceum (strain ATCC 12472 / DSM 30191 / JCM 1249 / CCUG 213 / NBRC 12614 / NCIMB 9131 / NCTC 9757 / MK).